Consider the following 301-residue polypeptide: Recombination-associated protein RdgC (301 aa).

The protein belongs to the RdgC family.

The protein localises to the cytoplasm. The protein resides in the nucleoid. Its function is as follows. May be involved in recombination. In Xanthomonas axonopodis pv. citri (strain 306), this protein is Recombination-associated protein RdgC.